A 216-amino-acid chain; its full sequence is MSKLQSEAVREAITTITGKSEAKKRNFVETIELQIGLKNYDPQKDKRFSGSVKLPHIPRPKMKICMLGDAQHVEEAEKMGLENMDVESLKKLNKNKKLVKKLAKKYHAFLASESVIKQIPRLLGPGLNKAGKFPTLVSHQESLESKVNETKATVKFQLKKVLCMGVAVGNLSMEEKQIFQNVQMSVNFLVSLLKKNWQNVRCLYLKSTMGPPQRIF.

Belongs to the universal ribosomal protein uL1 family. In terms of assembly, interacts with the GTPase NUG2.

This Arabidopsis thaliana (Mouse-ear cress) protein is Large ribosomal subunit protein uL1z (RPL10AA).